A 255-amino-acid polypeptide reads, in one-letter code: Electron transfer flavoprotein subunit beta (255 aa).

Ala-2 carries the post-translational modification N-acetylalanine. AMP-binding positions include Ala-9, 39–42 (NPFC), Cys-66, and 123–134 (GKQAIDDDCNQT). The segment at 183 to 205 (ADLRLNEPRYATLPNIMKAKKKK) is recognition loop. Lys-200 carries the post-translational modification N6,N6,N6-trimethyllysine; by ETFBKMT; alternate. Lys-200 is subject to N6-acetyllysine; alternate. N6-methyllysine; alternate is present on Lys-200. Lys-203 is modified (N6,N6,N6-trimethyllysine; by ETFBKMT). Lys-210 carries the post-translational modification N6-acetyllysine; alternate. Lys-210 is modified (N6-succinyllysine; alternate). Phosphoserine is present on residues Ser-223 and Ser-226. N6-acetyllysine is present on Lys-238. At Lys-248 the chain carries N6-acetyllysine; alternate. Residue Lys-248 is modified to N6-succinyllysine; alternate.

Belongs to the ETF beta-subunit/FixA family. In terms of assembly, heterodimer composed of ETFA and ETFB. Identified in a complex that contains ETFA, ETFB and ETFRF1. Interacts with ACADM. Post-translationally, methylated. Trimethylation at Lys-200 and Lys-203 may negatively regulate the activity in electron transfer from acyl-CoA dehydrogenases.

Its subcellular location is the mitochondrion matrix. In terms of biological role, heterodimeric electron transfer flavoprotein that accepts electrons from several mitochondrial dehydrogenases, including acyl-CoA dehydrogenases, glutaryl-CoA and sarcosine dehydrogenase. It transfers the electrons to the main mitochondrial respiratory chain via ETF-ubiquinone oxidoreductase. Required for normal mitochondrial fatty acid oxidation and normal amino acid metabolism. ETFB binds an AMP molecule that probably has a purely structural role. The sequence is that of Electron transfer flavoprotein subunit beta from Bos taurus (Bovine).